A 1134-amino-acid polypeptide reads, in one-letter code: MAYPELDAADFLQQLARRKEFKSLISPPVDQKKLIHDLRSHFVQIGGPGCEKGGRAFFPCDPYASPFPSIKGLQLHNAQLFVQNFQNPNTPYSRLLLNWQTGTGKSIAAIAIARQFMNHYMNFIENAPWIFVVGFTRAIIQTEMLRRPELGFVSYKEVAELHRLLHIAKQSGSTTSVESRHLNGFVSTLKRRLTDRNRGGFFQFYGYKEFASKLFNITSKGEEKNFDVLSLFHRSDEAEDTLNENDISQFVQKISEAESNGLIRVNQKIMEQLRGGLLIADEIHNVYNIQERNNYGIALQYVLDAFPPHQAPRAVFMSATPVTGSVMEYVDLLNLLVPRHELPNGQPLQRQQLFDNSGHSVKWKKDALALVERLSTGRVSFLLDTNTNYYPERIFAGKMLSYRNEMLPYLHFIECPMSDYQLETLKQLGPDPKISSNAYSIYDMVFPNPKFSKQTEPKAYGLFNSTETPAALSMASTDWLLENGVQIIEPSRRTPFNVSGSFLSLQPPTHISGLAFYSGKYTQMMKDILSIIRQGRGKILIYHNRVRMSGVLILQEILQSNGILNEVSSPVGTTRCSICAAIRDDHTTHSDHQFIPARFTILHSEIEPAVRERSLALFNASSNLEGHQLRILIGSKVIVEGLNFQAVRYEMIMSLPLDIPRLIQVFGRVVRKNSHMELPPNERNVTIYLYVSTTPDGGPELAKYAQKLKEYILIQEGDKALRKHAIDGFTNQIKIDKPMLESLPLSPSITPANVGATVLNTFEAYGYGEQEVKTISNIIISLFMARPVWTYSELWKAVSTPKLIQGITIDNKLFSEDNFALALVSLCYSKNQCKELCIQNRLCTIMHVPAKPEHLYIAAVLNYKKEPVLDIETYIRDFQPPTMHSIRITKYLEHSQTKEPFQVLYEKFQKDFQDEPMEQVLIHYPASFHYTMLEALIIDNLAGMGALVEVYKKFFIAFSKKDIQPFPDIFKIISHVPGDDDTLVGYATEDSVRLITSRQDKTWHEIPLYMLNINVKRKENDIVIGYMESKGKTLKFKIRPPIQVLKKNEITDIRMLNRGAVCETRGREEQQKIADQLGISLNLTKISAIKLCLLIRNTLLQKEMEARNQPNGMQDGIRWFYLFNDKMPSLVHTS.

The Helicase ATP-binding domain maps to 52 to 352 (KGGRAFFPCD…PNGQPLQRQQ (301 aa)). An ATP-binding site is contributed by 99–106 (WQTGTGKS). The short motif at 281–284 (DEIH) is the DEAH box element. The region spanning 524 to 725 (MMKDILSIIR…EGDKALRKHA (202 aa)) is the Helicase C-terminal domain.

Belongs to the DEAD box helicase family. DEAH subfamily.

The protein localises to the virion. The enzyme catalyses ATP + H2O = ADP + phosphate + H(+). Functionally, putative initation factor. This chain is Early transcription factor large subunit homolog, found in African swine fever virus (isolate Pig/Kenya/KEN-50/1950) (ASFV).